The sequence spans 147 residues: Flagellar assembly factor FliW (147 aa).

This sequence belongs to the FliW family. In terms of assembly, interacts with translational regulator CsrA and flagellin(s).

Its subcellular location is the cytoplasm. Acts as an anti-CsrA protein, binds CsrA and prevents it from repressing translation of its target genes, one of which is flagellin. Binds to flagellin and participates in the assembly of the flagellum. The protein is Flagellar assembly factor FliW of Treponema denticola (strain ATCC 35405 / DSM 14222 / CIP 103919 / JCM 8153 / KCTC 15104).